The following is a 214-amino-acid chain: Thiamine-phosphate synthase (214 aa).

Residues 40-44 and asparagine 72 contribute to the 4-amino-2-methyl-5-(diphosphooxymethyl)pyrimidine site; that span reads QLREK. 2 residues coordinate Mg(2+): aspartate 73 and aspartate 92. Residue serine 110 participates in 4-amino-2-methyl-5-(diphosphooxymethyl)pyrimidine binding. 137–139 serves as a coordination point for 2-[(2R,5Z)-2-carboxy-4-methylthiazol-5(2H)-ylidene]ethyl phosphate; sequence SPT. Lysine 140 provides a ligand contact to 4-amino-2-methyl-5-(diphosphooxymethyl)pyrimidine. 2-[(2R,5Z)-2-carboxy-4-methylthiazol-5(2H)-ylidene]ethyl phosphate contacts are provided by residues glycine 167 and 185–186; that span reads IS.

It belongs to the thiamine-phosphate synthase family. Requires Mg(2+) as cofactor.

The enzyme catalyses 2-[(2R,5Z)-2-carboxy-4-methylthiazol-5(2H)-ylidene]ethyl phosphate + 4-amino-2-methyl-5-(diphosphooxymethyl)pyrimidine + 2 H(+) = thiamine phosphate + CO2 + diphosphate. The catalysed reaction is 2-(2-carboxy-4-methylthiazol-5-yl)ethyl phosphate + 4-amino-2-methyl-5-(diphosphooxymethyl)pyrimidine + 2 H(+) = thiamine phosphate + CO2 + diphosphate. It carries out the reaction 4-methyl-5-(2-phosphooxyethyl)-thiazole + 4-amino-2-methyl-5-(diphosphooxymethyl)pyrimidine + H(+) = thiamine phosphate + diphosphate. The protein operates within cofactor biosynthesis; thiamine diphosphate biosynthesis; thiamine phosphate from 4-amino-2-methyl-5-diphosphomethylpyrimidine and 4-methyl-5-(2-phosphoethyl)-thiazole: step 1/1. Functionally, condenses 4-methyl-5-(beta-hydroxyethyl)thiazole monophosphate (THZ-P) and 2-methyl-4-amino-5-hydroxymethyl pyrimidine pyrophosphate (HMP-PP) to form thiamine monophosphate (TMP). The sequence is that of Thiamine-phosphate synthase from Wolinella succinogenes (strain ATCC 29543 / DSM 1740 / CCUG 13145 / JCM 31913 / LMG 7466 / NCTC 11488 / FDC 602W) (Vibrio succinogenes).